A 246-amino-acid polypeptide reads, in one-letter code: B-cell receptor-associated protein 31 (246 aa).

Over 2-6 (SLQWT) the chain is Lumenal. A helical membrane pass occupies residues 7 to 27 (AVATFLYAEVFVVLLLCIPFI). Over 28–43 (SPKRWQKIFKSRLVEL) the chain is Cytoplasmic. The chain crosses the membrane as a helical span at residues 44–64 (LVSYGNTFFVVLIVILVLLVI). At 65-102 (DAVREIRKYDDVTEKVNLQNNPGAMEHFHMKLFRAQRN) the chain is on the lumenal side. Residues 103 to 123 (LYIAGFSLLLSFLLRRLVTLI) traverse the membrane as a helical segment. At 124–246 (SQQATLLASN…VDGPMDKKEE (123 aa)) the chain is on the cytoplasmic side. Residues 165–237 (GGKLDVGNAE…EEHAKLQAAV (73 aa)) are a coiled coil. The Di-lysine motif signature appears at 243 to 246 (KKEE).

Belongs to the BCAP29/BCAP31 family. As to quaternary structure, homodimer and heterodimer with BCAP29. Binds CASP8 (isoform 9) as a complex containing BCAP31, BCAP29, BCL2 and/or BCL2L1. Forms a complex (via C-terminus) with TOMM40 which mediates the translocation of components of the mitochondrial membrane respiratory chain NADH dehydrogenase (Complex I) from the cytosol to the mitochondria; within the complex BCAP31 interacts directly with unprocessed and processed NDUFS4 and NDUFB11. Interacts with VDAC1. Interacts with VAMP3, VAMP1 and membrane IgD immunoglobulins. Interacts with HACD2. Interacts with DNM1L; may form part of a larger protein complex at the endoplasmic reticulum-mitochondrial interface during mitochondrial fission. In terms of assembly, (Microbial infection) Interacts (via C-terminus) with HRSV membrane protein SH; this interaction is direct. Cleaved by CASP8 and other caspases. As to expression, ubiquitous. Highly expressed in neurons and discrete endocrine cells.

It localises to the endoplasmic reticulum membrane. Its subcellular location is the endoplasmic reticulum-Golgi intermediate compartment membrane. Its function is as follows. Functions as a chaperone protein. Is one of the most abundant endoplasmic reticulum (ER) proteins. Plays a role in the export of secreted proteins in the ER, the recognition of abnormally folded protein and their targeting to the ER associated-degradation (ERAD). Also serves as a cargo receptor for the export of transmembrane proteins. Plays a role in the assembly of the mitochondrial membrane respiratory chain NADH dehydrogenase (Complex I) by stimulating the translocation of NDUFS4 and NDUFB11 from the cytosol to the mitochondria via interaction with TOMM40. In response to ER stress, delocalizes from the ER-mitochondria contact sites and binds BCL2. May be involved in CASP8-mediated apoptosis. This is B-cell receptor-associated protein 31 from Homo sapiens (Human).